The sequence spans 317 residues: Neurogenic differentiation factor 6-B (317 aa).

2 disordered regions span residues 1–90 and 297–317; these read MLTV…ERSR and DLHP…GYHN. Positions 37–56 are enriched in acidic residues; it reads EAEDDNTDREEEEEREEDEN. The span at 59–69 shows a compositional bias: basic residues; it reads PKKKGPRKKKS. Residues 65–70 carry the Nuclear localization signal motif; sequence RKKKSE. Residues 70-90 are compositionally biased toward basic and acidic residues; the sequence is EGRGDRVKMRRQEANARERSR. One can recognise a bHLH domain in the interval 78 to 130; it reads MRRQEANARERSRMHGLNDALESLRKVVPCYSKTQKLSKIETLRLAKNYIWAL. Residues 301–317 show a composition bias toward polar residues; sequence RSQSFQSQDELNTGYHN.

In terms of assembly, efficient DNA binding requires dimerization with another bHLH protein. As to expression, embryonic olfactory bulbs and olfactory placodes. In adult, expressed in brain and eye.

It is found in the nucleus. In terms of biological role, differentiation factor required for neurogenesis. Does not act as an upstream activator of isl1. The sequence is that of Neurogenic differentiation factor 6-B from Danio rerio (Zebrafish).